Here is a 341-residue protein sequence, read N- to C-terminus: Brain-specific homeobox/POU domain protein 3 (341 aa).

The short motif at 55-65 (RGAEALAAVDI) is the POU-IV box element. The 78-residue stretch at 182-259 (ETETDPRELE…ILEAWLEEAE (78 aa)) folds into the POU-specific domain. The homeobox DNA-binding region spans 277-336 (KKRKRTSIAAPEKRSLEAYFAVQPRPSSEKIAAIAEKLDLKKNVVRVWFCNQRQKQKRMK).

It belongs to the POU transcription factor family. Class-4 subfamily.

The protein localises to the nucleus. In terms of biological role, may play a role in specifying terminally differentiated neuronal phenotypes. This Gallus gallus (Chicken) protein is Brain-specific homeobox/POU domain protein 3 (BRN3).